We begin with the raw amino-acid sequence, 535 residues long: Bifunctional purine biosynthesis protein PurH (535 aa).

Positions 6-151 (TRLPIRRALI…KNHKDVAIVV (146 aa)) constitute an MGS-like domain.

Belongs to the PurH family.

The catalysed reaction is (6R)-10-formyltetrahydrofolate + 5-amino-1-(5-phospho-beta-D-ribosyl)imidazole-4-carboxamide = 5-formamido-1-(5-phospho-D-ribosyl)imidazole-4-carboxamide + (6S)-5,6,7,8-tetrahydrofolate. It catalyses the reaction IMP + H2O = 5-formamido-1-(5-phospho-D-ribosyl)imidazole-4-carboxamide. Its pathway is purine metabolism; IMP biosynthesis via de novo pathway; 5-formamido-1-(5-phospho-D-ribosyl)imidazole-4-carboxamide from 5-amino-1-(5-phospho-D-ribosyl)imidazole-4-carboxamide (10-formyl THF route): step 1/1. It participates in purine metabolism; IMP biosynthesis via de novo pathway; IMP from 5-formamido-1-(5-phospho-D-ribosyl)imidazole-4-carboxamide: step 1/1. In Pseudomonas aeruginosa (strain LESB58), this protein is Bifunctional purine biosynthesis protein PurH.